The following is a 366-amino-acid chain: UDP-N-acetylglucosamine--N-acetylmuramyl-(pentapeptide) pyrophosphoryl-undecaprenol N-acetylglucosamine transferase (366 aa).

UDP-N-acetyl-alpha-D-glucosamine-binding positions include 10–12 (TGG), N124, R165, S192, I247, and Q292.

It belongs to the glycosyltransferase 28 family. MurG subfamily.

It is found in the cell inner membrane. It catalyses the reaction di-trans,octa-cis-undecaprenyl diphospho-N-acetyl-alpha-D-muramoyl-L-alanyl-D-glutamyl-meso-2,6-diaminopimeloyl-D-alanyl-D-alanine + UDP-N-acetyl-alpha-D-glucosamine = di-trans,octa-cis-undecaprenyl diphospho-[N-acetyl-alpha-D-glucosaminyl-(1-&gt;4)]-N-acetyl-alpha-D-muramoyl-L-alanyl-D-glutamyl-meso-2,6-diaminopimeloyl-D-alanyl-D-alanine + UDP + H(+). It participates in cell wall biogenesis; peptidoglycan biosynthesis. Functionally, cell wall formation. Catalyzes the transfer of a GlcNAc subunit on undecaprenyl-pyrophosphoryl-MurNAc-pentapeptide (lipid intermediate I) to form undecaprenyl-pyrophosphoryl-MurNAc-(pentapeptide)GlcNAc (lipid intermediate II). This Geotalea daltonii (strain DSM 22248 / JCM 15807 / FRC-32) (Geobacter daltonii) protein is UDP-N-acetylglucosamine--N-acetylmuramyl-(pentapeptide) pyrophosphoryl-undecaprenol N-acetylglucosamine transferase.